Reading from the N-terminus, the 357-residue chain is Tetraacyldisaccharide 4'-kinase (357 aa).

49–56 provides a ligand contact to ATP; the sequence is TIGGTGKT.

It belongs to the LpxK family.

The catalysed reaction is a lipid A disaccharide + ATP = a lipid IVA + ADP + H(+). It functions in the pathway glycolipid biosynthesis; lipid IV(A) biosynthesis; lipid IV(A) from (3R)-3-hydroxytetradecanoyl-[acyl-carrier-protein] and UDP-N-acetyl-alpha-D-glucosamine: step 6/6. In terms of biological role, transfers the gamma-phosphate of ATP to the 4'-position of a tetraacyldisaccharide 1-phosphate intermediate (termed DS-1-P) to form tetraacyldisaccharide 1,4'-bis-phosphate (lipid IVA). This is Tetraacyldisaccharide 4'-kinase from Porphyromonas gingivalis (strain ATCC 33277 / DSM 20709 / CIP 103683 / JCM 12257 / NCTC 11834 / 2561).